Reading from the N-terminus, the 169-residue chain is MDRVDAPAEQMTPATDAAADSHQVPQSIDILKIMQSIPHRYPFLLIDKMVEIHAGQSAIGIKNVTVNEPFFQGHFPSHPVMPGVLIVEAMAQTAATLVVMTLGKAFEGKLVYFMTIENAKFRRPVGPGDQLRIHVDKERSRANVWKFKGVARVDDVAVAEATFSAMIMG.

H74 is a catalytic residue.

This sequence belongs to the thioester dehydratase family. FabZ subfamily.

It is found in the cytoplasm. It carries out the reaction a (3R)-hydroxyacyl-[ACP] = a (2E)-enoyl-[ACP] + H2O. Involved in unsaturated fatty acids biosynthesis. Catalyzes the dehydration of short chain beta-hydroxyacyl-ACPs and long chain saturated and unsaturated beta-hydroxyacyl-ACPs. In Gluconobacter oxydans (strain 621H) (Gluconobacter suboxydans), this protein is 3-hydroxyacyl-[acyl-carrier-protein] dehydratase FabZ.